A 309-amino-acid chain; its full sequence is Probable lipid kinase YegS-like (309 aa).

A DAGKc domain is found at 1–134; that stretch reads MAPSHWRLIL…VDLLRIDAEH (134 aa). Residues Thr39, 65-71, and Thr96 contribute to the ATP site; that span reads GDGTLSE. Mg(2+)-binding residues include Val219, Asp222, and Leu224. Glu280 acts as the Proton acceptor in catalysis.

This sequence belongs to the diacylglycerol/lipid kinase family. YegS lipid kinase subfamily. Mg(2+) is required as a cofactor. Requires Ca(2+) as cofactor.

It is found in the cytoplasm. Probably phosphorylates lipids; the in vivo substrate is unknown. The protein is Probable lipid kinase YegS-like of Xanthomonas oryzae pv. oryzae (strain MAFF 311018).